Reading from the N-terminus, the 459-residue chain is Argininosuccinate lyase (459 aa).

The protein belongs to the lyase 1 family. Argininosuccinate lyase subfamily.

It localises to the cytoplasm. It catalyses the reaction 2-(N(omega)-L-arginino)succinate = fumarate + L-arginine. Its pathway is amino-acid biosynthesis; L-arginine biosynthesis; L-arginine from L-ornithine and carbamoyl phosphate: step 3/3. The sequence is that of Argininosuccinate lyase from Lactococcus lactis subsp. lactis (strain IL1403) (Streptococcus lactis).